The chain runs to 428 residues: Kynureninase (428 aa).

Residues Thr104, Thr105, 132–135, Asp213, His216, and Tyr238 contribute to the pyridoxal 5'-phosphate site; that span reads FPSD. Lys239 is subject to N6-(pyridoxal phosphate)lysine. Residues Trp267 and Thr295 each contribute to the pyridoxal 5'-phosphate site.

The protein belongs to the kynureninase family. Homodimer. The cofactor is pyridoxal 5'-phosphate.

The enzyme catalyses L-kynurenine + H2O = anthranilate + L-alanine + H(+). It catalyses the reaction 3-hydroxy-L-kynurenine + H2O = 3-hydroxyanthranilate + L-alanine + H(+). It participates in amino-acid degradation; L-kynurenine degradation; L-alanine and anthranilate from L-kynurenine: step 1/1. The protein operates within cofactor biosynthesis; NAD(+) biosynthesis; quinolinate from L-kynurenine: step 2/3. Catalyzes the cleavage of L-kynurenine (L-Kyn) and L-3-hydroxykynurenine (L-3OHKyn) into anthranilic acid (AA) and 3-hydroxyanthranilic acid (3-OHAA), respectively. In Bacillus cereus (strain ATCC 10987 / NRS 248), this protein is Kynureninase.